A 142-amino-acid chain; its full sequence is Type IV pilus subunit protein TapA (142 aa).

Residues Met-1–Gly-6 constitute a propeptide, leader sequence. An N-methylphenylalanine modification is found at Phe-7. A helical membrane pass occupies residues Phe-7 to Leu-27.

This sequence belongs to the N-Me-Phe pilin family.

The protein resides in the membrane. Functionally, major component of the type IV (TAP) pilus. Aeromonas hydrophila possesses two distinct families of type IV pili: the bundle-forming pilus (Bfp) and the type IV pilus (Tap). This chain is Type IV pilus subunit protein TapA (tapA), found in Aeromonas hydrophila.